Reading from the N-terminus, the 317-residue chain is Type II restriction enzyme NaeI (317 aa).

As to quaternary structure, homodimer.

The catalysed reaction is Endonucleolytic cleavage of DNA to give specific double-stranded fragments with terminal 5'-phosphates.. Its function is as follows. An E and P subtype restriction enzyme that recognizes the double-stranded unmethylated sequence 5'-GCCGGC-3' and cleaves after C-3. This Lentzea aerocolonigenes (Lechevalieria aerocolonigenes) protein is Type II restriction enzyme NaeI.